Reading from the N-terminus, the 81-residue chain is Small cysteine-rich protein 6 (81 aa).

The N-terminal stretch at 1 to 23 (MDTKVACLLLIILGALTVQGAVS) is a signal peptide. A propeptide spanning residues 24 to 25 (GN) is cleaved from the precursor.

It belongs to the Cnidaria small cysteine-rich protein (SCRiP) family. beta subfamily. Contains 4 disulfide bonds.

It localises to the secreted. Its subcellular location is the nematocyst. Its function is as follows. Induces neurotoxic symptoms on zebrafish. Has also been claimed to be implied in calcification, but tests on homolog proteins suggest that proteins of this family have a neurotoxic function and not a calcification function. This is Small cysteine-rich protein 6 from Orbicella faveolata (Mountainous star coral).